Consider the following 212-residue polypeptide: MNIFRLTGDLSHLAAIIILLLKIWKSRSCAGISGKSQLLFALVFTTRYLDLFTSFISLYNTSMKLIYIACSYATVYLIYMKFKATYDGNHDTFRVEFLIVPVGGLSFLVNHDFSPLEILWTFSIYLESVAILPQLFMISKTGEAETITTHYLFFLGLYRALYLVNWIWRYYFEGFFDLIAVVAGVVQTVLYCDFFYLYVTKVLKGKKLSLPA.

The Lumenal segment spans residues M1–F4. The helical transmembrane segment at R5–W24 threads the bilayer. Topologically, residues K25–I32 are cytoplasmic. A helical membrane pass occupies residues S33–F52. Positions R47–Y48 are interaction with the K-D-E-L motif on target proteins. Residues T53–L58 lie on the Lumenal side of the membrane. Residues Y59–Y79 traverse the membrane as a helical segment. Residues M80–T92 lie on the Cytoplasmic side of the membrane. A helical membrane pass occupies residues F93–N110. The Lumenal segment spans residues H111–L116. The helical transmembrane segment at E117–L135 threads the bilayer. At F136–T149 the chain is on the cytoplasmic side. The chain crosses the membrane as a helical span at residues H150–W168. Positions R159 to R169 are interaction with the K-D-E-L motif on target proteins. Over R169 to L178 the chain is Lumenal. The helical transmembrane segment at I179 to V199 threads the bilayer. At T200–A212 the chain is on the cytoplasmic side. Positions K204–K207 are important for recycling of cargo proteins with the sequence motif K-D-E-L from the Golgi to the endoplasmic reticulum.

Belongs to the ERD2 family.

The protein resides in the endoplasmic reticulum membrane. It is found in the golgi apparatus membrane. The protein localises to the cytoplasmic vesicle. It localises to the COPI-coated vesicle membrane. Membrane receptor that binds the K-D-E-L sequence motif in the C-terminal part of endoplasmic reticulum resident proteins and maintains their localization in that compartment by participating to their vesicle-mediated recycling back from the Golgi. Binding is pH dependent, and is optimal at pH 5-5.4. The polypeptide is ER lumen protein-retaining receptor 2 (KDELR2) (Gallus gallus (Chicken)).